The sequence spans 493 residues: Vacuolar-processing enzyme (493 aa).

The signal sequence occupies residues 1-34 (MAVHRSLLNKPTWCRVAFWWWMLVMVMRIQGTNG). The propeptide occupies 35–53 (KEQDSVIKLPTQEVDAESD). His-176 is a catalytic residue. Cys-218 functions as the Nucleophile in the catalytic mechanism. A disulfide bridge connects residues Cys-251 and Cys-265. Residue Asn-318 is glycosylated (N-linked (GlcNAc...) asparagine). 2 cysteine pairs are disulfide-bonded: Cys-429–Cys-459 and Cys-441–Cys-476.

Belongs to the peptidase C13 family.

Its function is as follows. Asparagine-specific endopeptidase involved in the processing of vacuolar seed protein precursors into the mature forms. This is Vacuolar-processing enzyme from Phaseolus vulgaris (Kidney bean).